The sequence spans 382 residues: MSNATNNTLGSLLPQLEAAANSNSLYGGMVPNLRFNITMIVIWGILLTIHVVQLLMRQYWFSIAFICTGILEVLGYIGRTWSHSNVADMDAFLLNMICLTIAPVFTMGGIYYQLAKLIEVYGHRFSLLPSPMAYSFIFICSDIVSLVVQAVGGGLCGVAVTDGTSTTTGNHVFIAGLAIQVASMAIFLMLWFHFLFRIYISVRWEHINSRPISLSLLKISQTEVDYLYREKFHFLRLEPKRWVFHYFNLAMTVAVLTIFTRCCYRLAELVVGWDGYLITHEWYFIILDALMMAIATVTLTIFHPGFAFKGRSTSIPITPGHVDPETLPHTDDVEDILDTSDSKQFDIEKEEFQASMKYPISTFKQFMSKIANLFSSKKKAKL.

At 1–34 (MSNATNNTLGSLLPQLEAAANSNSLYGGMVPNLR) the chain is on the extracellular side. N-linked (GlcNAc...) asparagine glycans are attached at residues N3 and N6. The chain crosses the membrane as a helical span at residues 35–55 (FNITMIVIWGILLTIHVVQLL). Topologically, residues 56–57 (MR) are cytoplasmic. A helical transmembrane segment spans residues 58–78 (QYWFSIAFICTGILEVLGYIG). Topologically, residues 79–90 (RTWSHSNVADMD) are extracellular. The helical transmembrane segment at 91–111 (AFLLNMICLTIAPVFTMGGIY) threads the bilayer. The Cytoplasmic portion of the chain corresponds to 112-135 (YQLAKLIEVYGHRFSLLPSPMAYS). The chain crosses the membrane as a helical span at residues 136–156 (FIFICSDIVSLVVQAVGGGLC). The Extracellular portion of the chain corresponds to 157 to 171 (GVAVTDGTSTTTGNH). A helical transmembrane segment spans residues 172–192 (VFIAGLAIQVASMAIFLMLWF). Residues 193–241 (HFLFRIYISVRWEHINSRPISLSLLKISQTEVDYLYREKFHFLRLEPKR) lie on the Cytoplasmic side of the membrane. A helical transmembrane segment spans residues 242 to 262 (WVFHYFNLAMTVAVLTIFTRC). At 263-281 (CYRLAELVVGWDGYLITHE) the chain is on the extracellular side. A helical membrane pass occupies residues 282-302 (WYFIILDALMMAIATVTLTIF). Topologically, residues 303–382 (HPGFAFKGRS…LFSSKKKAKL (80 aa)) are cytoplasmic.

This sequence belongs to the lipid-translocating exporter (LTE) (TC 9.A.26.1) family.

It is found in the cell membrane. Functionally, catalyzes the ATP-dependent translocation of sphingoid long-chain bases (LCBs) from the cytoplasmic site toward the extracytoplasmic side of the membrane (flip-flop). Involved in the establishment of the functional lipid asymmetry of the plasma membrane. Regulates intracellular levels of LCBs, sphingolipid precursors that are growth inhibitory at increased levels. The polypeptide is Sphingoid long-chain base transporter RSB1 (RSB1) (Saccharomyces cerevisiae (strain Lalvin EC1118 / Prise de mousse) (Baker's yeast)).